The chain runs to 125 residues: uncharacterized protein (125 aa).

The protein localises to the plastid. Its subcellular location is the chloroplast. This is an uncharacterized protein from Guillardia theta (Cryptophyte).